The sequence spans 420 residues: 3-phosphoshikimate 1-carboxyvinyltransferase (420 aa).

Residues lysine 20, serine 21, and arginine 25 each contribute to the 3-phosphoshikimate site. Lysine 20 is a binding site for phosphoenolpyruvate. Positions 90 and 118 each coordinate phosphoenolpyruvate. The 3-phosphoshikimate site is built by serine 159, serine 160, glutamine 161, serine 187, aspartate 303, and lysine 330. Glutamine 161 provides a ligand contact to phosphoenolpyruvate. Aspartate 303 serves as the catalytic Proton acceptor. Residues arginine 334, arginine 376, and lysine 402 each contribute to the phosphoenolpyruvate site.

The protein belongs to the EPSP synthase family. Monomer.

Its subcellular location is the cytoplasm. The enzyme catalyses 3-phosphoshikimate + phosphoenolpyruvate = 5-O-(1-carboxyvinyl)-3-phosphoshikimate + phosphate. Its pathway is metabolic intermediate biosynthesis; chorismate biosynthesis; chorismate from D-erythrose 4-phosphate and phosphoenolpyruvate: step 6/7. Catalyzes the transfer of the enolpyruvyl moiety of phosphoenolpyruvate (PEP) to the 5-hydroxyl of shikimate-3-phosphate (S3P) to produce enolpyruvyl shikimate-3-phosphate and inorganic phosphate. The chain is 3-phosphoshikimate 1-carboxyvinyltransferase from Brachyspira hyodysenteriae (strain ATCC 49526 / WA1).